Here is a 210-residue protein sequence, read N- to C-terminus: Thiamine-phosphate synthase (210 aa).

4-amino-2-methyl-5-(diphosphooxymethyl)pyrimidine contacts are provided by residues 39 to 43 and Asn-71; that span reads QLREK. Positions 72 and 91 each coordinate Mg(2+). A 4-amino-2-methyl-5-(diphosphooxymethyl)pyrimidine-binding site is contributed by Ser-110. 134–136 provides a ligand contact to 2-[(2R,5Z)-2-carboxy-4-methylthiazol-5(2H)-ylidene]ethyl phosphate; that stretch reads TPT. Residue Lys-137 participates in 4-amino-2-methyl-5-(diphosphooxymethyl)pyrimidine binding. Gly-163 serves as a coordination point for 2-[(2R,5Z)-2-carboxy-4-methylthiazol-5(2H)-ylidene]ethyl phosphate.

The protein belongs to the thiamine-phosphate synthase family. The cofactor is Mg(2+).

It carries out the reaction 2-[(2R,5Z)-2-carboxy-4-methylthiazol-5(2H)-ylidene]ethyl phosphate + 4-amino-2-methyl-5-(diphosphooxymethyl)pyrimidine + 2 H(+) = thiamine phosphate + CO2 + diphosphate. The enzyme catalyses 2-(2-carboxy-4-methylthiazol-5-yl)ethyl phosphate + 4-amino-2-methyl-5-(diphosphooxymethyl)pyrimidine + 2 H(+) = thiamine phosphate + CO2 + diphosphate. The catalysed reaction is 4-methyl-5-(2-phosphooxyethyl)-thiazole + 4-amino-2-methyl-5-(diphosphooxymethyl)pyrimidine + H(+) = thiamine phosphate + diphosphate. Its pathway is cofactor biosynthesis; thiamine diphosphate biosynthesis; thiamine phosphate from 4-amino-2-methyl-5-diphosphomethylpyrimidine and 4-methyl-5-(2-phosphoethyl)-thiazole: step 1/1. Condenses 4-methyl-5-(beta-hydroxyethyl)thiazole monophosphate (THZ-P) and 2-methyl-4-amino-5-hydroxymethyl pyrimidine pyrophosphate (HMP-PP) to form thiamine monophosphate (TMP). In Campylobacter jejuni (strain RM1221), this protein is Thiamine-phosphate synthase.